The following is a 154-amino-acid chain: Calmodulin-like protein 6 (154 aa).

EF-hand domains are found at residues 1-36 (MDST…LGII), 37-72 (IPED…IMVE), 77-112 (VGEE…LGLK), and 115-150 (KTLE…GRFF). 19 residues coordinate Ca(2+): Asp-14, Asp-16, Asp-18, Lys-20, Glu-25, Asp-50, Asn-52, Asp-54, Cys-56, Glu-61, Asp-90, Asn-92, Asp-94, Glu-101, Asp-128, Asp-130, Asp-132, Arg-134, and Glu-139.

The protein belongs to the calmodulin family.

Potential calcium sensor. The protein is Calmodulin-like protein 6 (CML6) of Arabidopsis thaliana (Mouse-ear cress).